The following is a 346-amino-acid chain: Methylthioribose-1-phosphate isomerase (346 aa).

Residues 50–52, arginine 93, and glutamine 196 contribute to the substrate site; that span reads RGA. The active-site Proton donor is the aspartate 237. 247 to 248 is a substrate binding site; that stretch reads NK.

Belongs to the eIF-2B alpha/beta/delta subunits family. MtnA subfamily.

It catalyses the reaction 5-(methylsulfanyl)-alpha-D-ribose 1-phosphate = 5-(methylsulfanyl)-D-ribulose 1-phosphate. It functions in the pathway amino-acid biosynthesis; L-methionine biosynthesis via salvage pathway; L-methionine from S-methyl-5-thio-alpha-D-ribose 1-phosphate: step 1/6. Its function is as follows. Catalyzes the interconversion of methylthioribose-1-phosphate (MTR-1-P) into methylthioribulose-1-phosphate (MTRu-1-P). The polypeptide is Methylthioribose-1-phosphate isomerase (Alkalilimnicola ehrlichii (strain ATCC BAA-1101 / DSM 17681 / MLHE-1)).